The sequence spans 520 residues: Transactivator/viroplasmin protein (520 aa).

Residues 487–520 (QDASADSGPKDGPPPTRSIVEKEDVPTTSSKQVD) form a disordered region.

This sequence belongs to the caulimoviridae viroplasmin family.

Its subcellular location is the host cytoplasm. Functionally, enhances the ribosomal termination-reinitiation event leading to the translation of major open reading frames on the polycistronic viral RNAs. This chain is Transactivator/viroplasmin protein, found in Cauliflower mosaic virus (strain CM-1841) (CaMV).